A 514-amino-acid chain; its full sequence is Peptide chain release factor 3 (514 aa).

Positions Lys8–His268 constitute a tr-type G domain. GTP is bound by residues Ser17 to Thr24, Asp85 to His89, and Asn139 to Asp142.

It belongs to the TRAFAC class translation factor GTPase superfamily. Classic translation factor GTPase family. PrfC subfamily.

The protein localises to the cytoplasm. Its function is as follows. Increases the formation of ribosomal termination complexes and stimulates activities of RF-1 and RF-2. It binds guanine nucleotides and has strong preference for UGA stop codons. It may interact directly with the ribosome. The stimulation of RF-1 and RF-2 is significantly reduced by GTP and GDP, but not by GMP. This chain is Peptide chain release factor 3, found in Streptococcus pyogenes serotype M18 (strain MGAS8232).